The following is a 454-amino-acid chain: MASPSHPSRDCSQVIDHSHVPEFEVATWIKITLILVYLVIFVVGILGNSVTIRVTQVLQKKGYLQKEVTDHMVSLACSDILVFLIGMPMEFYSIIWNPLTTPSYTVSCKVHTFLFEACSYATLLHVLTLSFERYIAICHPFRYKAMSGPCQVKLLIGFVWVTSALVALPLLFAMGVEYPLVNVPSHRGLICNRSRTRHQEQPESSNMSICTNLSSRWTVFQSSIFSAFVVYLVVLVSVAFMCWSMMQVLRRSKQGTLAAQGQQLQLRKLESQESRSARRQTIIFLELIVVTLAVCWMPNQVRRIMAAAKPKHDWTKSYFRAYMILLPFSDTFFYLSSVVNPLLYNVSSQQFRSVFGQVLRCQLTLPHANQEKHLRAHVASTMDSTRSACRPLIFPASQRSSSSARANMVFLSTFHSEAKPESKPQELSCESPEPNSERKPANPATRNGFQEHEV.

Over 1-34 (MASPSHPSRDCSQVIDHSHVPEFEVATWIKITLI) the chain is Extracellular. Disulfide bonds link C11-C191 and C108-C210. Zn(2+) contacts are provided by H17 and H19. A helical transmembrane segment spans residues 35-55 (LVYLVIFVVGILGNSVTIRVT). Topologically, residues 56 to 69 (QVLQKKGYLQKEVT) are cytoplasmic. A helical membrane pass occupies residues 70-89 (DHMVSLACSDILVFLIGMPM). Residues 90–109 (EFYSIIWNPLTTPSYTVSCK) lie on the Extracellular side of the membrane. A helical membrane pass occupies residues 110-131 (VHTFLFEACSYATLLHVLTLSF). Residues 132–151 (ERYIAICHPFRYKAMSGPCQ) lie on the Cytoplasmic side of the membrane. Residues 152–172 (VKLLIGFVWVTSALVALPLLF) traverse the membrane as a helical segment. Residues 173-217 (AMGVEYPLVNVPSHRGLICNRSRTRHQEQPESSNMSICTNLSSRW) are Extracellular-facing. 3 N-linked (GlcNAc...) asparagine glycosylation sites follow: N192, N206, and N212. A helical membrane pass occupies residues 218–242 (TVFQSSIFSAFVVYLVVLVSVAFMC). At 243–283 (WSMMQVLRRSKQGTLAAQGQQLQLRKLESQESRSARRQTII) the chain is on the cytoplasmic side. The chain crosses the membrane as a helical span at residues 284-305 (FLELIVVTLAVCWMPNQVRRIM). The Extracellular portion of the chain corresponds to 306 to 323 (AAAKPKHDWTKSYFRAYM). A helical membrane pass occupies residues 324 to 344 (ILLPFSDTFFYLSSVVNPLLY). Residues 345-454 (NVSSQQFRSV…TRNGFQEHEV (110 aa)) lie on the Cytoplasmic side of the membrane. A Phosphoserine modification is found at S397. Residues 415–454 (HSEAKPESKPQELSCESPEPNSERKPANPATRNGFQEHEV) form a disordered region.

The protein belongs to the G-protein coupled receptor 1 family. In terms of assembly, interacts with HTR1A. Interacts with GALR1. In terms of tissue distribution, detected in liver, kidney, abomasum, uterus, small intestine and colon.

It localises to the cell membrane. Zinc-sensing receptor that can sense changes in extracellular Zn(2+), mediate Zn(2+) signal transmission, and participates in the regulation of numerous physiological processes including glucose homeostasis regulation, gastrointestinal mobility, hormone secretion and cell death. Activation by Zn(2+) in keratinocytes increases the intracellular concentration of Ca(2+) and activates the ERK/MAPK and PI3K/AKT signaling pathways leading to epithelial repair. Plays an essential role in normal wound healing by inducing the production of cytokines including the major inflammatory cytokine IL6 via the PKC/MAPK/CEBPB pathway. Regulates adipose tissue metabolism, especially lipolysis, and regulates the function of lipases, such as hormone-sensitive lipase and adipose triglyceride lipase. Plays a role in the inhibition of cell death and protects against oxidative, endoplasmic reticulum and mitochondrial stress by inducing secretion of the cytoprotective pigment epithelium-derived growth factor (PEDF) and probably other protective transcripts in a GNA13/RHOA/SRE-dependent manner. Forms dynamic heteroreceptor complexes with HTR1A and GALR1 depending on cell type or specific physiological states, resulting in signaling diversity: HTR1A-GPR39 shows additive increase in signaling along the serum response element (SRE) and NF-kappa-B pathways while GALR1 acts as an antagonist blocking SRE. The polypeptide is G-protein coupled receptor 39 (GPR39) (Bos taurus (Bovine)).